We begin with the raw amino-acid sequence, 757 residues long: Centrosomal protein of 68 kDa (757 aa).

Composition is skewed to basic and acidic residues over residues 1–17 (MALG…EDTK) and 86–96 (ANREPVAERSE). Disordered stretches follow at residues 1-47 (MALG…RLEA), 67-158 (WIGT…PSLA), 192-259 (QPSS…GGDA), 311-480 (PGPQ…ESDD), 509-551 (PTGD…SGDP), and 597-618 (LDRW…GGEQ). A compositionally biased stretch (polar residues) spans 125–144 (LSSSEEFPQTLSLPRTTTIC). 2 stretches are compositionally biased toward low complexity: residues 192–206 (QPSS…TGSS) and 224–240 (VSSS…SSVV). A Phosphoserine; by PLK1 modification is found at S332. Residues 339 to 355 (FSVSPASTLKSPTNVSP) show a composition bias toward polar residues. 2 stretches are compositionally biased toward basic and acidic residues: residues 405 to 432 (GSRD…KHLD) and 439 to 456 (RTRD…EKRT). Residues 457–467 (SQSARRPTCTE) show a composition bias toward polar residues. 2 positions are modified to phosphoserine: S472 and S478. Low complexity predominate over residues 524-543 (SDGPASFPSSSSQSQLPPGA).

In terms of assembly, interacts with CNTLN; the interaction recruits CEP68 to the centrosome. Interacts with the SCF(FBXW11) complex which contains SKP1, CUL1 and FBXW11; the interaction is probably mediated by FBXW11 and the complex also contains CDK5RAP2 and PCNT. Also interacts with F-box protein BTRC. Interacts with serine/threonine-protein kinase PLK1; the interaction leads to phosphorylation of CEP68 and its subsequent degradation. Interacts with NEK2; the interaction leads to phosphorylation of CEP68. Phosphorylation by PLK1 is required for binding to BTRC in prometaphase. Phosphorylated directly or indirectly by NEK2. NEK2-mediated phosphorylation promotes CEP68 dissociation from the centrosome and its degradation at the onset of mitosis. Post-translationally, ubiquitinated and targeted for proteasomal degradation in early mitosis by the SCF(BTRC) and/or SCF(FBXW11) E3 ubiquitin-protein ligase complexes. Degradation is complete by prometaphase and is required for removal of CDK5RAP2 from the peripheral pericentriolar material and subsequent centriole separation.

It localises to the cytoplasm. The protein localises to the cytoskeleton. Its subcellular location is the microtubule organizing center. It is found in the centrosome. Functionally, involved in maintenance of centrosome cohesion, probably as part of a linker structure which prevents centrosome splitting. Required for localization of CDK5RAP2 to the centrosome during interphase. Contributes to CROCC/rootletin filament formation. The chain is Centrosomal protein of 68 kDa (CEP68) from Homo sapiens (Human).